Consider the following 303-residue polypeptide: 1-phosphofructokinase (303 aa).

ATP is bound at residue 248 to 249; the sequence is GD. The active-site Proton acceptor is Asp-249.

This sequence belongs to the carbohydrate kinase PfkB family.

It carries out the reaction beta-D-fructose 1-phosphate + ATP = beta-D-fructose 1,6-bisphosphate + ADP + H(+). Functionally, catalyzes the ATP-dependent phosphorylation of fructose-l-phosphate to fructose-l,6-bisphosphate. The protein is 1-phosphofructokinase (fruK) of Bacillus subtilis (strain 168).